The following is an 89-amino-acid chain: MEQESELLSLNTLARILTLYFSSEKGTKITPSALELITQYLRIYSKEAVCRAYEEKKNSIMSSSENEDIVLELEDLENGIAAQLALDFS.

The protein belongs to the CENP-X/MHF2 family. As to quaternary structure, the MHF histone-fold complex is a heterotetramer of 2 mhf1-mhf2 heterodimers. Component of the inner kinetochore constitutive centromere-associated network (CCAN) (also known as central kinetochore Sim4 complex in fission yeast), which is composed of at least cnl2, cnp3, cnp20, fta1, fta2, fta3, fta4, fta6, fta7, mal2, mhf1, mhf2, mis6, mis15, mis17, sim4 and wip1.

Its subcellular location is the nucleus. The protein resides in the cytoplasm. Component of a FANCM-MHF complex that promotes gene conversion at blocked replication forks, probably by reversal of the stalled fork. FANCM-MHF promotes non-crossover recombination. In Schizosaccharomyces pombe (strain 972 / ATCC 24843) (Fission yeast), this protein is Inner kinetochore subunit mhf2.